The following is a 33-amino-acid chain: MSDIN-like toxin proprotein 2 (33 aa).

The propeptide occupies 1–10; the sequence is MSDINATRLP. A cross-link (cyclopeptide (Ile-Pro)) is located at residues 11–18; that stretch reads IILAPIIP. A propeptide spanning residues 19-33 is cleaved from the precursor; that stretch reads CINDDVNSTLTSGER.

It belongs to the MSDIN fungal toxin family. Post-translationally, processed by the macrocyclase-peptidase enzyme POPB to yield a toxic cyclic octapeptide. POPB first removes 10 residues from the N-terminus. Conformational trapping of the remaining peptide forces the enzyme to release this intermediate rather than proceed to macrocyclization. The enzyme rebinds the remaining peptide in a different conformation and catalyzes macrocyclization of the N-terminal 8 residues.

In terms of biological role, probable toxin that belongs to the MSDIN-like toxin family responsible for a large number of food poisoning cases and deaths. This is MSDIN-like toxin proprotein 2 from Amanita phalloides (Death cap).